The following is a 388-amino-acid chain: Acetate kinase (388 aa).

Mg(2+) is bound at residue asparagine 14. Lysine 21 is a binding site for ATP. Residue arginine 80 coordinates substrate. Aspartate 137 (proton donor/acceptor) is an active-site residue. ATP-binding positions include 197 to 201 (HLGNG), 271 to 273 (DFR), and 319 to 323 (GIGEH). Glutamate 373 is a Mg(2+) binding site.

It belongs to the acetokinase family. As to quaternary structure, homodimer. It depends on Mg(2+) as a cofactor. Mn(2+) serves as cofactor.

The protein resides in the cytoplasm. The catalysed reaction is acetate + ATP = acetyl phosphate + ADP. It functions in the pathway metabolic intermediate biosynthesis; acetyl-CoA biosynthesis; acetyl-CoA from acetate: step 1/2. Its function is as follows. Catalyzes the formation of acetyl phosphate from acetate and ATP. Can also catalyze the reverse reaction. The polypeptide is Acetate kinase (Mycobacterium marinum (strain ATCC BAA-535 / M)).